Reading from the N-terminus, the 1518-residue chain is Putative cellulose synthase 2 (1518 aa).

Positions 1–731 (MYGTWFTTGK…EEKLEKQSFV (731 aa)) are catalytic. 3 helical membrane passes run 24-44 (PVWV…SVRI), 71-91 (ITVF…VWRL), and 105-125 (LAVL…LSYF). Residues 144–237 (QWPSVDVFVP…FAVIFDCDHV (94 aa)) are catalytic subdomain A. Residue Asp-186 is part of the active site. Residues Asp-233 and Asp-235 each coordinate substrate. Residues 314–374 (EAVMGIGGFA…GQRVRWARGM (61 aa)) form a catalytic subdomain B region. Asp-330 is a catalytic residue. Helical transmembrane passes span 404–424 (FLFA…LFLG), 427–447 (IIAA…FHSV), 465–485 (IYET…LLQP), 514–534 (ILAG…VWQF), and 543–563 (FILN…SIAV). The 100-residue stretch at 569-668 (QTRNAPRVSV…ERQVVSMVFG (100 aa)) folds into the PilZ domain. Positions 732–1518 (LKPVPRSARH…IARDDLTGEL (787 aa)) are cyclic di-GMP binding domain. The segment at 765–785 (APSPDQSGVTAETPFGDSNTG) is disordered. The span at 768 to 785 (PDQSGVTAETPFGDSNTG) shows a compositional bias: polar residues. The chain crosses the membrane as a helical span at residues 1481-1501 (ALYLAGLAGAGLAALGVWAWL).

In the N-terminal section; belongs to the glycosyltransferase 2 family. It in the C-terminal section; belongs to the AcsB/BcsB family.

Its subcellular location is the cell inner membrane. The catalysed reaction is [(1-&gt;4)-beta-D-glucosyl](n) + UDP-alpha-D-glucose = [(1-&gt;4)-beta-D-glucosyl](n+1) + UDP + H(+). It functions in the pathway glycan metabolism; bacterial cellulose biosynthesis. In Komagataeibacter xylinus (Gluconacetobacter xylinus), this protein is Putative cellulose synthase 2 (bcsABII-A).